The chain runs to 166 residues: 3-isopropylmalate dehydratase small subunit (166 aa).

It belongs to the LeuD family. LeuD type 2 subfamily. In terms of assembly, heterodimer of LeuC and LeuD.

The enzyme catalyses (2R,3S)-3-isopropylmalate = (2S)-2-isopropylmalate. It functions in the pathway amino-acid biosynthesis; L-leucine biosynthesis; L-leucine from 3-methyl-2-oxobutanoate: step 2/4. Catalyzes the isomerization between 2-isopropylmalate and 3-isopropylmalate, via the formation of 2-isopropylmaleate. This is 3-isopropylmalate dehydratase small subunit from Heliobacterium modesticaldum (strain ATCC 51547 / Ice1).